A 219-amino-acid polypeptide reads, in one-letter code: Thiamine-phosphate synthase (219 aa).

4-amino-2-methyl-5-(diphosphooxymethyl)pyrimidine contacts are provided by residues 44-48 and Asn-79; that span reads QFREK. The Mg(2+) site is built by Asp-80 and Asp-99. Residue Ser-117 participates in 4-amino-2-methyl-5-(diphosphooxymethyl)pyrimidine binding. 143-145 serves as a coordination point for 2-[(2R,5Z)-2-carboxy-4-methylthiazol-5(2H)-ylidene]ethyl phosphate; the sequence is TST. Lys-146 serves as a coordination point for 4-amino-2-methyl-5-(diphosphooxymethyl)pyrimidine. 2-[(2R,5Z)-2-carboxy-4-methylthiazol-5(2H)-ylidene]ethyl phosphate-binding positions include Gly-175 and 195–196; that span reads IS.

It belongs to the thiamine-phosphate synthase family. Requires Mg(2+) as cofactor.

It catalyses the reaction 2-[(2R,5Z)-2-carboxy-4-methylthiazol-5(2H)-ylidene]ethyl phosphate + 4-amino-2-methyl-5-(diphosphooxymethyl)pyrimidine + 2 H(+) = thiamine phosphate + CO2 + diphosphate. It carries out the reaction 2-(2-carboxy-4-methylthiazol-5-yl)ethyl phosphate + 4-amino-2-methyl-5-(diphosphooxymethyl)pyrimidine + 2 H(+) = thiamine phosphate + CO2 + diphosphate. The enzyme catalyses 4-methyl-5-(2-phosphooxyethyl)-thiazole + 4-amino-2-methyl-5-(diphosphooxymethyl)pyrimidine + H(+) = thiamine phosphate + diphosphate. Its pathway is cofactor biosynthesis; thiamine diphosphate biosynthesis; thiamine phosphate from 4-amino-2-methyl-5-diphosphomethylpyrimidine and 4-methyl-5-(2-phosphoethyl)-thiazole: step 1/1. In terms of biological role, condenses 4-methyl-5-(beta-hydroxyethyl)thiazole monophosphate (THZ-P) and 2-methyl-4-amino-5-hydroxymethyl pyrimidine pyrophosphate (HMP-PP) to form thiamine monophosphate (TMP). In Bacillus thuringiensis subsp. konkukian (strain 97-27), this protein is Thiamine-phosphate synthase.